The sequence spans 357 residues: Cytosolic Fe-S cluster assembly factor NAR1 (357 aa).

Residues Cys-14, Cys-28, Cys-31, Cys-34, Cys-129, Cys-172, Cys-297, and Cys-301 each coordinate [4Fe-4S] cluster.

Belongs to the NARF family.

Its function is as follows. Component of the cytosolic Fe/S protein assembly machinery. May play a role in the transfer of pre-assembled Fe/S clusters to target apoproteins. The sequence is that of Cytosolic Fe-S cluster assembly factor NAR1 (NAR1) from Encephalitozoon cuniculi (strain GB-M1) (Microsporidian parasite).